The following is a 590-amino-acid chain: Glutamine--fructose-6-phosphate aminotransferase [isomerizing] (590 aa).

The Nucleophile; for GATase activity role is filled by Cys-2. Residues 2 to 219 (CGIVACILKD…DGEMVILDGD (218 aa)) form the Glutamine amidotransferase type-2 domain. 2 consecutive SIS domains span residues 277–415 (VVEE…PELM) and 438–580 (LAAT…PDKP). The For Fru-6P isomerization activity role is filled by Lys-585.

In terms of assembly, homodimer.

The protein localises to the cytoplasm. It catalyses the reaction D-fructose 6-phosphate + L-glutamine = D-glucosamine 6-phosphate + L-glutamate. Functionally, catalyzes the first step in hexosamine metabolism, converting fructose-6P into glucosamine-6P using glutamine as a nitrogen source. The protein is Glutamine--fructose-6-phosphate aminotransferase [isomerizing] of Methanothermobacter thermautotrophicus (strain ATCC 29096 / DSM 1053 / JCM 10044 / NBRC 100330 / Delta H) (Methanobacterium thermoautotrophicum).